Here is a 338-residue protein sequence, read N- to C-terminus: RNA 3'-terminal phosphate cyclase (338 aa).

ATP-binding positions include Gln-103 and Tyr-283 to Gln-287. The active-site Tele-AMP-histidine intermediate is the His-308.

The protein belongs to the RNA 3'-terminal cyclase family. Type 1 subfamily.

Its subcellular location is the cytoplasm. The enzyme catalyses a 3'-end 3'-phospho-ribonucleotide-RNA + ATP = a 3'-end 2',3'-cyclophospho-ribonucleotide-RNA + AMP + diphosphate. Functionally, catalyzes the conversion of 3'-phosphate to a 2',3'-cyclic phosphodiester at the end of RNA. The mechanism of action of the enzyme occurs in 3 steps: (A) adenylation of the enzyme by ATP; (B) transfer of adenylate to an RNA-N3'P to produce RNA-N3'PP5'A; (C) and attack of the adjacent 2'-hydroxyl on the 3'-phosphorus in the diester linkage to produce the cyclic end product. The biological role of this enzyme is unknown but it is likely to function in some aspects of cellular RNA processing. The chain is RNA 3'-terminal phosphate cyclase from Escherichia coli O45:K1 (strain S88 / ExPEC).